We begin with the raw amino-acid sequence, 105 residues long: Nitrogen fixation nifHD region GlnB-like protein 1 (105 aa).

Belongs to the P(II) protein family.

In terms of biological role, could be involved in the regulation of nitrogen fixation. This Methanobacterium ivanovii protein is Nitrogen fixation nifHD region GlnB-like protein 1 (glnBA).